A 406-amino-acid chain; its full sequence is MAENGKNCDQRRVAMNKEHHNGNFTDPSSVNEKKRREREERQNIVLWRQPLITLQYFSLEILVILKEWTSKLWHRQSIVVSFLLLLAVLIATYYVEGVHQQYVQRIEKQFLLYAYWIGLGILSSVGLGTGLHTFLLYLGPHIASVTLAAYECNSVNFPEPPYPDQIICPDEEGTEGTISLWSIISKVRIEACMWGIGTAIGELPPYFMARAARLSGAEPDDEEYQEFEEMLEHAESAQDFASRAKLAVQKLVQKVGFFGILACASIPNPLFDLAGITCGHFLVPFWTFFGATLIGKAIIKMHIQKIFVIITFSKHIVEQMVAFIGAVPGIGPSLQKPFQEYLEAQRQKLHHKSEMGTPQGENWLSWMFEKLVVVMVCYFILSIINSMAQSYAKRIQQRLNSEEKTK.

The segment covering 1–21 (MAENGKNCDQRRVAMNKEHHN) has biased composition (basic and acidic residues). The segment at 1–35 (MAENGKNCDQRRVAMNKEHHNGNFTDPSSVNEKKR) is disordered. Ala2 is modified (N-acetylalanine). Residues 2-43 (AENGKNCDQRRVAMNKEHHNGNFTDPSSVNEKKRREREERQN) are Cytoplasmic-facing. The chain crosses the membrane as a helical span at residues 44–64 (IVLWRQPLITLQYFSLEILVI). Over 65-77 (LKEWTSKLWHRQS) the chain is Extracellular. The chain crosses the membrane as a helical span at residues 78-98 (IVVSFLLLLAVLIATYYVEGV). Topologically, residues 99–109 (HQQYVQRIEKQ) are cytoplasmic. The chain crosses the membrane as a helical span at residues 110-130 (FLLYAYWIGLGILSSVGLGTG). Residues 131 to 250 (LHTFLLYLGP…ASRAKLAVQK (120 aa)) lie on the Extracellular side of the membrane. The tract at residues 173-316 (GTEGTISLWS…FVIITFSKHI (144 aa)) is VTT domain. Residues 251 to 271 (LVQKVGFFGILACASIPNPLF) traverse the membrane as a helical segment. The Cytoplasmic segment spans residues 272 to 273 (DL). A helical membrane pass occupies residues 274–294 (AGITCGHFLVPFWTFFGATLI). At 295–305 (GKAIIKMHIQK) the chain is on the extracellular side. Residues 306-326 (IFVIITFSKHIVEQMVAFIGA) traverse the membrane as a helical segment. The Cytoplasmic portion of the chain corresponds to 327–363 (VPGIGPSLQKPFQEYLEAQRQKLHHKSEMGTPQGENW). The helical transmembrane segment at 364–384 (LSWMFEKLVVVMVCYFILSII) threads the bilayer. At 385-406 (NSMAQSYAKRIQQRLNSEEKTK) the chain is on the extracellular side.

Belongs to the VMP1 family. As to quaternary structure, interacts with BECN1. Interacts with TJP1. Interacts with TP53INP2. Interacts with TMEM41B. Interacts with ATP2A2, PLN and SLN; competes with PLN and SLN to prevent them from forming an inhibitory complex with ATP2A2. Interacts with ATG2A.

The protein localises to the endoplasmic reticulum-Golgi intermediate compartment membrane. Its subcellular location is the cell membrane. It is found in the vacuole membrane. The protein resides in the endoplasmic reticulum membrane. It carries out the reaction a 1,2-diacyl-sn-glycero-3-phospho-L-serine(in) = a 1,2-diacyl-sn-glycero-3-phospho-L-serine(out). The enzyme catalyses cholesterol(in) = cholesterol(out). The catalysed reaction is a 1,2-diacyl-sn-glycero-3-phosphocholine(in) = a 1,2-diacyl-sn-glycero-3-phosphocholine(out). It catalyses the reaction a 1,2-diacyl-sn-glycero-3-phosphoethanolamine(in) = a 1,2-diacyl-sn-glycero-3-phosphoethanolamine(out). Its function is as follows. Phospholipid scramblase involved in lipid homeostasis and membrane dynamics processes. Has phospholipid scramblase activity toward cholesterol and phosphatidylserine, as well as phosphatidylethanolamine and phosphatidylcholine. Required for autophagosome formation: participates in early stages of autophagosome biogenesis at the endoplasmic reticulum (ER) membrane by reequilibrating the leaflets of the ER as lipids are extracted by ATG2 (ATG2A or ATG2B) to mediate autophagosome assembly. Regulates ATP2A2 activity to control ER-isolation membrane contacts for autophagosome formation. In addition to autophagy, involved in other processes in which phospholipid scramblase activity is required. Modulates ER contacts with lipid droplets, mitochondria and endosomes. Plays an essential role in formation of cell junctions. Upon stress such as bacterial and viral infection, promotes formation of cytoplasmic vacuoles followed by cell death. Involved in the cytoplasmic vacuolization of acinar cells during the early stage of acute pancreatitis. (Microbial infection) Host factor required for infection by all flaviviruses tested such as Zika virus and Yellow fever virus. Probably required post-entry of the virus to facilitate the ER membrane remodeling necessary to form replication organelles. The polypeptide is Vacuole membrane protein 1 (Homo sapiens (Human)).